Reading from the N-terminus, the 139-residue chain is D-ribose pyranase (139 aa).

Histidine 20 acts as the Proton donor in catalysis. Substrate contacts are provided by residues aspartate 28, histidine 106, and 128-130; that span reads YAN.

Belongs to the RbsD / FucU family. RbsD subfamily. As to quaternary structure, homodecamer.

The protein localises to the cytoplasm. It catalyses the reaction beta-D-ribopyranose = beta-D-ribofuranose. The protein operates within carbohydrate metabolism; D-ribose degradation; D-ribose 5-phosphate from beta-D-ribopyranose: step 1/2. Functionally, catalyzes the interconversion of beta-pyran and beta-furan forms of D-ribose. In Edwardsiella ictaluri (strain 93-146), this protein is D-ribose pyranase.